We begin with the raw amino-acid sequence, 137 residues long: Large ribosomal subunit protein uL16 (137 aa).

The protein belongs to the universal ribosomal protein uL16 family. In terms of assembly, part of the 50S ribosomal subunit.

Its function is as follows. Binds 23S rRNA and is also seen to make contacts with the A and possibly P site tRNAs. The chain is Large ribosomal subunit protein uL16 from Dinoroseobacter shibae (strain DSM 16493 / NCIMB 14021 / DFL 12).